The primary structure comprises 153 residues: Histone H2B.3 (153 aa).

2 stretches are compositionally biased toward basic and acidic residues: residues 1-28 and 36-53; these read MAPKAEKKPAAKKPAEEEPAAEKAEKAL and EKRLPAGKAEKGSGEGRK. Positions 1–61 are disordered; the sequence is MAPKAEKKPA…RKAGRKKAKK (61 aa). N6-acetyllysine occurs at positions 7 and 37. A Glycyl lysine isopeptide (Lys-Gly) (interchain with G-Cter in ubiquitin) cross-link involves residue lysine 149.

The protein belongs to the histone H2B family. As to quaternary structure, the nucleosome is a histone octamer containing two molecules each of H2A, H2B, H3 and H4 assembled in one H3-H4 heterotetramer and two H2A-H2B heterodimers. The octamer wraps approximately 147 bp of DNA. Post-translationally, can be acetylated to form H2BK6ac and H2BK33ac. In terms of processing, monoubiquitinated by BRE1 to form H2BK143ub1 and deubiquitinated by UBP26. Required for heterochromatic histone H3 di- and trimethylation at H3K4me. May give a specific tag for epigenetic transcriptional activation.

It localises to the nucleus. The protein localises to the chromosome. In terms of biological role, core component of nucleosome. Nucleosomes wrap and compact DNA into chromatin, limiting DNA accessibility to the cellular machineries which require DNA as a template. Histones thereby play a central role in transcription regulation, DNA repair, DNA replication and chromosomal stability. DNA accessibility is regulated via a complex set of post-translational modifications of histones, also called histone code, and nucleosome remodeling. The sequence is that of Histone H2B.3 (H2B.3) from Oryza sativa subsp. indica (Rice).